Here is a 257-residue protein sequence, read N- to C-terminus: 3-dehydroquinate dehydratase (257 aa).

3-dehydroquinate contacts are provided by residues 50–52 (EWR) and Arg86. Catalysis depends on His147, which acts as the Proton donor/acceptor. The active-site Schiff-base intermediate with substrate is the Lys174. Arg216, Ser235, and Gln239 together coordinate 3-dehydroquinate.

Belongs to the type-I 3-dehydroquinase family. Homodimer.

The enzyme catalyses 3-dehydroquinate = 3-dehydroshikimate + H2O. It participates in metabolic intermediate biosynthesis; chorismate biosynthesis; chorismate from D-erythrose 4-phosphate and phosphoenolpyruvate: step 3/7. In terms of biological role, involved in the third step of the chorismate pathway, which leads to the biosynthesis of aromatic amino acids. Catalyzes the cis-dehydration of 3-dehydroquinate (DHQ) and introduces the first double bond of the aromatic ring to yield 3-dehydroshikimate. The protein is 3-dehydroquinate dehydratase of Geobacillus thermodenitrificans (strain NG80-2).